A 1255-amino-acid chain; its full sequence is Cilia- and flagella-associated protein 337 B (1255 aa).

Positions 87 to 122 constitute an EF-hand domain; that stretch reads KLVRCLTNLFEEIDLNGNGILEWDEFTNYVIEKATV. Positions 100, 102, 104, and 111 each coordinate Ca(2+). WD repeat units lie at residues 228 to 269, 282 to 322, 326 to 365, 368 to 407, 410 to 449, 496 to 536, 538 to 577, 580 to 624, 625 to 664, 669 to 708, 769 to 808, and 844 to 883; these read DLKT…WVLA, EFKN…KELE, AHTE…KKRV, EHTR…LIYK, GHSS…NVQC, VDDY…KIFS, VTQG…MIKA, KHSA…RTLE, LKDV…QNGS, TQYE…FKFQ, QQNL…TILE, and AHYE…LIDQ. Disordered regions lie at residues 941 to 988 and 1140 to 1160; these read IKSL…NFNP and QQQV…QQPG. Over residues 953-969 the composition is skewed to low complexity; it reads TQESSTQEQEAAQQPQQ. The span at 1148–1160 shows a compositional bias: polar residues; it reads TEPSSNRSHQQPG.

Belongs to the CFAP337 family. As to quaternary structure, associates with components of the nexin-dynein regulatory complex (N-DRC) and the CFAP184:CFAP263 complex.

It localises to the cell projection. It is found in the cilium. Functionally, associates with components of the nexin-dynein regulatory complex (N-DRC), a key regulator of ciliary/flagellar motility, and might act as an inner dynein arm (IDA) hub or linkage. The chain is Cilia- and flagella-associated protein 337 B from Tetrahymena thermophila (strain SB210).